A 106-amino-acid chain; its full sequence is HIG1 domain family member 2A, mitochondrial (106 aa).

A2 bears the N-acetylalanine mark. In terms of domain architecture, HIG1 spans 20–106 (VIEGLSPTVY…LAVTAMKSRP (87 aa)). The next 2 helical transmembrane spans lie at 47–67 (PVVP…LYSF) and 83–103 (IAAQ…TAMK). The Mitochondrial matrix segment spans residues 104-106 (SRP).

In terms of assembly, associates with cytochrome c oxidase (COX, complex IV); proposed complex component.

Its subcellular location is the mitochondrion membrane. The protein localises to the mitochondrion inner membrane. Its function is as follows. Proposed subunit of cytochrome c oxidase (COX, complex IV), which is the terminal component of the mitochondrial respiratory chain that catalyzes the reduction of oxygen to water. May be involved in cytochrome c oxidase activity. May play a role in the assembly of respiratory supercomplexes. The chain is HIG1 domain family member 2A, mitochondrial (HIGD2A) from Homo sapiens (Human).